A 160-amino-acid polypeptide reads, in one-letter code: Endoribonuclease YbeY (160 aa).

His111, His115, and His121 together coordinate Zn(2+).

This sequence belongs to the endoribonuclease YbeY family. It depends on Zn(2+) as a cofactor.

The protein localises to the cytoplasm. Single strand-specific metallo-endoribonuclease involved in late-stage 70S ribosome quality control and in maturation of the 3' terminus of the 16S rRNA. The protein is Endoribonuclease YbeY of Stutzerimonas stutzeri (strain A1501) (Pseudomonas stutzeri).